A 141-amino-acid polypeptide reads, in one-letter code: Nucleoside diphosphate kinase (141 aa).

ATP is bound by residues lysine 9, phenylalanine 57, arginine 85, threonine 91, arginine 102, and asparagine 112. Catalysis depends on histidine 115, which acts as the Pros-phosphohistidine intermediate.

This sequence belongs to the NDK family. Homotetramer. It depends on Mg(2+) as a cofactor.

The protein resides in the cytoplasm. It catalyses the reaction a 2'-deoxyribonucleoside 5'-diphosphate + ATP = a 2'-deoxyribonucleoside 5'-triphosphate + ADP. It carries out the reaction a ribonucleoside 5'-diphosphate + ATP = a ribonucleoside 5'-triphosphate + ADP. Major role in the synthesis of nucleoside triphosphates other than ATP. The ATP gamma phosphate is transferred to the NDP beta phosphate via a ping-pong mechanism, using a phosphorylated active-site intermediate. The chain is Nucleoside diphosphate kinase from Chlamydia muridarum (strain MoPn / Nigg).